A 271-amino-acid chain; its full sequence is 3-methyl-2-oxobutanoate hydroxymethyltransferase (271 aa).

Residues aspartate 51 and aspartate 90 each contribute to the Mg(2+) site. 3-methyl-2-oxobutanoate contacts are provided by residues 51–52 (DS), aspartate 90, and lysine 118. Glutamate 120 serves as a coordination point for Mg(2+). Residue glutamate 186 is the Proton acceptor of the active site.

This sequence belongs to the PanB family. Homodecamer; pentamer of dimers. The cofactor is Mg(2+).

The protein resides in the cytoplasm. The enzyme catalyses 3-methyl-2-oxobutanoate + (6R)-5,10-methylene-5,6,7,8-tetrahydrofolate + H2O = 2-dehydropantoate + (6S)-5,6,7,8-tetrahydrofolate. It participates in cofactor biosynthesis; (R)-pantothenate biosynthesis; (R)-pantoate from 3-methyl-2-oxobutanoate: step 1/2. In terms of biological role, catalyzes the reversible reaction in which hydroxymethyl group from 5,10-methylenetetrahydrofolate is transferred onto alpha-ketoisovalerate to form ketopantoate. This chain is 3-methyl-2-oxobutanoate hydroxymethyltransferase, found in Xanthomonas campestris pv. campestris (strain 8004).